We begin with the raw amino-acid sequence, 285 residues long: Acetyl-coenzyme A carboxylase carboxyl transferase subunit beta (285 aa).

The 264-residue stretch at 22–285 folds into the CoA carboxyltransferase N-terminal domain; that stretch reads LWTKCEACGA…HPGVAYAPGV (264 aa). Residues Cys26, Cys29, Cys45, and Cys48 each contribute to the Zn(2+) site. The C4-type zinc finger occupies 26–48; it reads CEACGAQIYKKEFQENLHVCPKC.

It belongs to the AccD/PCCB family. Acetyl-CoA carboxylase is a heterohexamer composed of biotin carboxyl carrier protein (AccB), biotin carboxylase (AccC) and two subunits each of ACCase subunit alpha (AccA) and ACCase subunit beta (AccD). Requires Zn(2+) as cofactor.

Its subcellular location is the cytoplasm. It carries out the reaction N(6)-carboxybiotinyl-L-lysyl-[protein] + acetyl-CoA = N(6)-biotinyl-L-lysyl-[protein] + malonyl-CoA. It functions in the pathway lipid metabolism; malonyl-CoA biosynthesis; malonyl-CoA from acetyl-CoA: step 1/1. Component of the acetyl coenzyme A carboxylase (ACC) complex. Biotin carboxylase (BC) catalyzes the carboxylation of biotin on its carrier protein (BCCP) and then the CO(2) group is transferred by the transcarboxylase to acetyl-CoA to form malonyl-CoA. The protein is Acetyl-coenzyme A carboxylase carboxyl transferase subunit beta of Thermus thermophilus (strain ATCC BAA-163 / DSM 7039 / HB27).